A 366-amino-acid polypeptide reads, in one-letter code: MPGNTFGHSFRITTWGESHGRALGVVIDGVPAGLPLDTEIVQKELDRRRPGQSAVSTPRSETDKVEIISGIFEGKTTGTPISMMVWNKDADSSSYDNIKDLPRPGHADYPYMEKYGIRDHRGGGRSSARETIGRVAAGAVAKEILSIFGIDIIAHVTELGGIRAKEMPFDTIKEHLEKTPVRCADLEAAQLMLEKVGKAREEHESIGGVVEIIAIGLPPGIGEPVFDKLDADIAKAIMSIGAVKGVEIGIGNEAAQMKGSQMNDPFILEDGKIIAQTNNAGGILGGLSTGMPIICRASVKPTPSISKVQHTVNTKEMKNSDIIIKGRHDPTIPPRMVPVAEAMMALVLVDHMIRSGHIHPNSLLKQ.

Residue arginine 48 coordinates NADP(+). FMN contacts are provided by residues 125–127 (RSS), glycine 285, 300–304 (KPTPS), and arginine 327.

This sequence belongs to the chorismate synthase family. Requires FMNH2 as cofactor.

It carries out the reaction 5-O-(1-carboxyvinyl)-3-phosphoshikimate = chorismate + phosphate. Its pathway is metabolic intermediate biosynthesis; chorismate biosynthesis; chorismate from D-erythrose 4-phosphate and phosphoenolpyruvate: step 7/7. Catalyzes the anti-1,4-elimination of the C-3 phosphate and the C-6 proR hydrogen from 5-enolpyruvylshikimate-3-phosphate (EPSP) to yield chorismate, which is the branch point compound that serves as the starting substrate for the three terminal pathways of aromatic amino acid biosynthesis. This reaction introduces a second double bond into the aromatic ring system. This is Chorismate synthase from Methanococcoides burtonii (strain DSM 6242 / NBRC 107633 / OCM 468 / ACE-M).